We begin with the raw amino-acid sequence, 54 residues long: Large ribosomal subunit protein bL33A (54 aa).

It belongs to the bacterial ribosomal protein bL33 family.

This is Large ribosomal subunit protein bL33A from Mesoplasma florum (strain ATCC 33453 / NBRC 100688 / NCTC 11704 / L1) (Acholeplasma florum).